Here is a 196-residue protein sequence, read N- to C-terminus: Protein GrpE (196 aa).

The disordered stretch occupies residues methionine 1–proline 39.

This sequence belongs to the GrpE family. Homodimer.

It localises to the cytoplasm. Its function is as follows. Participates actively in the response to hyperosmotic and heat shock by preventing the aggregation of stress-denatured proteins, in association with DnaK and GrpE. It is the nucleotide exchange factor for DnaK and may function as a thermosensor. Unfolded proteins bind initially to DnaJ; upon interaction with the DnaJ-bound protein, DnaK hydrolyzes its bound ATP, resulting in the formation of a stable complex. GrpE releases ADP from DnaK; ATP binding to DnaK triggers the release of the substrate protein, thus completing the reaction cycle. Several rounds of ATP-dependent interactions between DnaJ, DnaK and GrpE are required for fully efficient folding. The sequence is that of Protein GrpE from Escherichia coli O139:H28 (strain E24377A / ETEC).